The sequence spans 131 residues: C-glycoside deglycosidase beta subunit (131 aa).

This sequence belongs to the C-glycoside deglycosidase beta subunit family. As to quaternary structure, heterodimer composed of an alpha subunit (CarB) and a beta subunit (CarC). The cofactor is a divalent metal cation.

It catalyses the reaction 3''-dehydroisovitexin = 1,5-anhydro-D-erythro-hex-1-en-3-ulose + apigenin. It carries out the reaction 3''-dehydroisoorientin = 1,5-anhydro-D-erythro-hex-1-en-3-ulose + luteolin. In terms of biological role, carbon-carbon bond-cleaving enzyme which participates in the metabolism of C-glycosides. Acts on the C6-glycosylated compounds 3''-dehydroisovitexin (3''-oxo-isovitexin) and 3''-dehydroisoorientin (3''-oxo-homoorientin). Shows weak activity with 3'-dehydromangiferin (3'-oxo-mangiferin). In Microbacterium trichothecenolyticum (Aureobacterium trichothecenolyticum), this protein is C-glycoside deglycosidase beta subunit.